Reading from the N-terminus, the 456-residue chain is tRNA (guanine(37)-N(1))-methyltransferase (456 aa).

Residues His246, 284–285 (DL), 310–311 (DG), and Asn336 contribute to the S-adenosyl-L-methionine site.

The protein belongs to the class I-like SAM-binding methyltransferase superfamily. TRM5/TYW2 family. In terms of assembly, monomer.

It is found in the mitochondrion matrix. The protein localises to the nucleus. It localises to the cytoplasm. It catalyses the reaction guanosine(37) in tRNA + S-adenosyl-L-methionine = N(1)-methylguanosine(37) in tRNA + S-adenosyl-L-homocysteine + H(+). In terms of biological role, specifically methylates the N1 position of guanosine-37 in various cytoplasmic and mitochondrial tRNAs. Methylation is not dependent on the nature of the nucleoside 5' of the target nucleoside. This is the first step in the biosynthesis of wybutosine (yW), a modified base adjacent to the anticodon of tRNAs and required for accurate decoding. The chain is tRNA (guanine(37)-N(1))-methyltransferase from Ciona intestinalis (Transparent sea squirt).